The chain runs to 118 residues: Ribonuclease P protein component (118 aa).

It belongs to the RnpA family. As to quaternary structure, consists of a catalytic RNA component (M1 or rnpB) and a protein subunit.

It catalyses the reaction Endonucleolytic cleavage of RNA, removing 5'-extranucleotides from tRNA precursor.. In terms of biological role, RNaseP catalyzes the removal of the 5'-leader sequence from pre-tRNA to produce the mature 5'-terminus. It can also cleave other RNA substrates such as 4.5S RNA. The protein component plays an auxiliary but essential role in vivo by binding to the 5'-leader sequence and broadening the substrate specificity of the ribozyme. The sequence is that of Ribonuclease P protein component from Rickettsia akari (strain Hartford).